Here is a 739-residue protein sequence, read N- to C-terminus: Nucleoprotein (739 aa).

Positions 334–363 (VNVGEQYQQLREAATEAEKQLQQYAESREL) form a coiled coil. 2 disordered regions span residues 414–475 (RPNL…YHDD) and 493–641 (DDNK…DIGQ). Polar residues predominate over residues 531-546 (SDNNQQSADSEEQGGQ). Residues 570-579 (TLMDQGDDDP) show a composition bias toward acidic residues. Over residues 614-624 (AEAHEPPHKSS) the composition is skewed to basic and acidic residues. The segment covering 625–634 (NEPAETSQLN) has biased composition (polar residues).

Belongs to the filoviruses nucleoprotein family. Homooligomer. Homomultimerizes to form the nucleocapsid. Binds to viral genomic RNA. Interacts with VP35 and VP30 to form the nucleocapsid. Interacts with host PPP2R5C; this interaction leads to VP30 dephosphorylation and viral transcription. Interacts with VP24; this interaction facilitates nucleocapsid assembly and genome packaging. Interacts with matrix protein VP40; this interaction allows recruitment of the nucleocapsid into progeny virions. Interacts with host STAU1. Interacts with host NXF1 (via RNA-binding domain); this interaction recruits NXF1 to the inclusion bodies were viral replication takes place, probably to export viral mRNA-NXF1 complexes from these sites. Interacts with host CCDC92; this interaction sequesters NP in the host cytoplasm. Interacts with host TRIM14. Phosphorylated and O-glycosylated by host. Acetylated by host EP300 in vitro.

It localises to the virion. The protein resides in the host cytoplasm. Oligomerizes into helical capsid to encapsidate the viral genome, protecting it from nucleases and the cellular innate immune response. VP35 binds to and stabilizes monomeric NP, keeping it soluble. Upon virus replication, NP is recruited to bind cooperatively viral genomic RNA and VP35 is released. The encapsidated genomic RNA is termed the nucleocapsid and serves as template for transcription and replication. The nucleocapsid is helical with a pitch of 10.81 NP per turn and a diameter of about 22nm. Each NP binds to six nucleotides of viral genomic RNA, three being exposed to the solvant and three hidden into the nucleocapsid. Also recruits host PPP2R5C phosphatase to dephosphorylate VP30 and thereby promote viral transcription. Upon virion assembly and budding, NP binds to VP24 and possibly host STAU1. The polypeptide is Nucleoprotein (NP) (Reston ebolavirus (strain Reston-89) (REBOV)).